Consider the following 393-residue polypeptide: Acetylornithine aminotransferase (393 aa).

Pyridoxal 5'-phosphate is bound by residues 95-96 (GA) and Phe127. Position 130 (Arg130) interacts with N(2)-acetyl-L-ornithine. 214 to 217 (DEVQ) contributes to the pyridoxal 5'-phosphate binding site. Lys243 carries the post-translational modification N6-(pyridoxal phosphate)lysine. Ser271 is a N(2)-acetyl-L-ornithine binding site. Thr272 lines the pyridoxal 5'-phosphate pocket.

Belongs to the class-III pyridoxal-phosphate-dependent aminotransferase family. ArgD subfamily. In terms of assembly, homodimer. Pyridoxal 5'-phosphate is required as a cofactor.

The protein resides in the cytoplasm. It carries out the reaction N(2)-acetyl-L-ornithine + 2-oxoglutarate = N-acetyl-L-glutamate 5-semialdehyde + L-glutamate. It functions in the pathway amino-acid biosynthesis; L-arginine biosynthesis; N(2)-acetyl-L-ornithine from L-glutamate: step 4/4. The chain is Acetylornithine aminotransferase from Nitrosomonas europaea (strain ATCC 19718 / CIP 103999 / KCTC 2705 / NBRC 14298).